A 363-amino-acid polypeptide reads, in one-letter code: Lipase (363 aa).

The N-terminal stretch at 1–24 (MVLKQRANYLGFLIVFFTAFLVEA) is a signal peptide. The propeptide occupies 25–94 (VPIKRQSNST…SYPDSVVQAM (70 aa)). Residues 33 to 69 (STVDSLPPLIPSRTSAPSSSPSTTDPEAPAMSRNGPL) form a disordered region. Positions 43-62 (PSRTSAPSSSPSTTDPEAPA) are enriched in low complexity. 3 cysteine pairs are disulfide-bonded: Cys123/Cys362, Cys134/Cys137, and Cys329/Cys338. The active-site Nucleophile is Ser238. Asp297 (charge relay system) is an active-site residue. Asp350 is a Ca(2+) binding site. The active-site Charge relay system is the His351.

Belongs to the AB hydrolase superfamily. Lipase family.

The enzyme catalyses a triacylglycerol + H2O = a diacylglycerol + a fatty acid + H(+). This chain is Lipase, found in Rhizomucor miehei.